The following is a 351-amino-acid chain: Cell shape-determining protein MreB (351 aa).

ATP contacts are provided by residues Thr20–Asn22, Gly169–Thr171, Glu217–Lys220, and Gly299–Leu302.

This sequence belongs to the FtsA/MreB family. In terms of assembly, forms polymers.

The protein resides in the cytoplasm. In terms of biological role, forms membrane-associated dynamic filaments that are essential for cell shape determination. Acts by regulating cell wall synthesis and cell elongation, and thus cell shape. A feedback loop between cell geometry and MreB localization may maintain elongated cell shape by targeting cell wall growth to regions of negative cell wall curvature. The polypeptide is Cell shape-determining protein MreB (Pasteurella multocida (strain Pm70)).